Reading from the N-terminus, the 376-residue chain is Chaperone protein DnaJ (376 aa).

Residues 5–70 enclose the J domain; that stretch reads DYYEILGVSK…QKRAAYDQYG (66 aa). Residues 131-209 form a CR-type zinc finger; that stretch reads GVTKEIRIPT…CHGHGRVERS (79 aa). Residues C144, C147, C161, C164, C183, C186, C197, and C200 each contribute to the Zn(2+) site. CXXCXGXG motif repeat units lie at residues 144 to 151, 161 to 168, 183 to 190, and 197 to 204; these read CDVCHGSG, CPTCHGSG, CPHCQGRG, and CNKCHGHG.

It belongs to the DnaJ family. Homodimer. It depends on Zn(2+) as a cofactor.

It is found in the cytoplasm. Functionally, participates actively in the response to hyperosmotic and heat shock by preventing the aggregation of stress-denatured proteins and by disaggregating proteins, also in an autonomous, DnaK-independent fashion. Unfolded proteins bind initially to DnaJ; upon interaction with the DnaJ-bound protein, DnaK hydrolyzes its bound ATP, resulting in the formation of a stable complex. GrpE releases ADP from DnaK; ATP binding to DnaK triggers the release of the substrate protein, thus completing the reaction cycle. Several rounds of ATP-dependent interactions between DnaJ, DnaK and GrpE are required for fully efficient folding. Also involved, together with DnaK and GrpE, in the DNA replication of plasmids through activation of initiation proteins. This chain is Chaperone protein DnaJ, found in Shigella dysenteriae serotype 1 (strain Sd197).